We begin with the raw amino-acid sequence, 493 residues long: Cytochrome P450 monooxygenase esdpG (493 aa).

The chain crosses the membrane as a helical span at residues 10–30 (VLGVTWLSALFTLGSLSVFWL). Cys-434 serves as a coordination point for heme.

This sequence belongs to the cytochrome P450 family. Heme is required as a cofactor.

It localises to the membrane. It participates in secondary metabolite biosynthesis; terpenoid biosynthesis. In terms of biological role, cytochrome P450 monooxygenasee; part of the cluster that mediates the biosynthesis of shearones, diterpenoid pyrones (DPs) which are structurally diverse meroterpenoids consisting of a diterpene linked by a pyrone, and which may exhibit a range of bioactivities. Whitin the pathway, esdpG takes part in the molecular scaffold modification via the hydroxylation at C-11 and C-12 and can transform shearone A into shearone C and shearone B into shearone D. The molecular scaffold is commonly biosynthesized by a series of enzymes including the non-reducing polyketide synthase (NR-PKS) esdpA that generates an alpha-pyrone; the prenyltransferase esdpC that attaches a geranylgeranyl pyrophosphate (GGPP) produced by the GGPP synthase (GGPPS) esdpD onto the pyrone unit; the FAD-dependent monooxygenase esdpE that converts an olefin on the diterpene unit into an epoxide; and the terpene cyclase esdpB that catalyzes the cyclization reactions to give the molecular backbone shearone A. In the modification steps, esdpF oxidizes the hydroxy group to a ketone at C-3 and esdpG then attaches hydroxy groups at both C-11 and C-12. After that, esdpI hydroxylates at C-20 and esdpH hydroxylates at C-6'. The ether bridge is generated by nucleophilic attack of the hydroxy group at C-20 to the carbonyl carbon at C-3. EsdpH can also functions prior to esdpI. The different combinations of these modification enzymes lead to the production of diverse shearone derivatives, shearone I being the end product of the pathway. The alpha-ketoglutarate-dependent dioxygenase esdpJ seems not to be involved in this pathway. This Penicillium shearii (Eupenicillium shearii) protein is Cytochrome P450 monooxygenase esdpG.